The chain runs to 167 residues: Regulator of sigma D (167 aa).

The protein belongs to the Rsd/AlgQ family. As to quaternary structure, interacts with RpoD.

The protein resides in the cytoplasm. In terms of biological role, binds RpoD and negatively regulates RpoD-mediated transcription activation by preventing the interaction between the primary sigma factor RpoD with the catalytic core of the RNA polymerase and with promoter DNA. May be involved in replacement of the RNA polymerase sigma subunit from RpoD to RpoS during the transition from exponential growth to the stationary phase. This Yersinia enterocolitica serotype O:8 / biotype 1B (strain NCTC 13174 / 8081) protein is Regulator of sigma D.